A 276-amino-acid polypeptide reads, in one-letter code: Replication protein A 32 kDa subunit-A (276 aa).

Over residues 19-31 (GGGGYMQSPGGFG) the composition is skewed to gly residues. The tract at residues 19-47 (GGGGYMQSPGGFGSPAPTQGEKKSRSRSQ) is disordered. The OB DNA-binding region spans 77–151 (VTIVGIVRHA…KSVVAFKIAP (75 aa)).

It belongs to the replication factor A protein 2 family. In terms of assembly, component of the replication protein A complex (RPA/RP-A), a heterotrimeric complex composed of RPA1, RPA2 and RPA3. Differentially phosphorylated throughout the cell cycle, becoming phosphorylated at the G1-S transition and dephosphorylated in late mitosis. Phosphorylation increases upon replication fork stalling.

The protein localises to the nucleus. The protein resides in the PML body. Functionally, as part of the heterotrimeric replication protein A complex (RPA/RP-A), binds and stabilizes single-stranded DNA intermediates, that form during DNA replication or upon DNA stress. It prevents their reannealing and in parallel, recruits and activates different proteins and complexes involved in DNA metabolism. Thereby, it plays an essential role both in DNA replication and the cellular response to DNA damage. This Xenopus laevis (African clawed frog) protein is Replication protein A 32 kDa subunit-A (rpa2-a).